We begin with the raw amino-acid sequence, 243 residues long: uncharacterized protein (243 aa).

Residues 1–16 (MKLLALVALCAVGVAS) form the signal peptide. An N-linked (GlcNAc...) asparagine glycan is attached at Asn-55. Disordered regions lie at residues 95–126 (SQGR…EKPS) and 208–235 (NQQQ…KPTV). Composition is skewed to low complexity over residues 99–112 (NQQQ…SQGG) and 209–229 (QQQQ…STTL). Cys-141 and Cys-239 are disulfide-bonded.

It belongs to the protease inhibitor I33 family.

It is found in the secreted. This is an uncharacterized protein from Caenorhabditis elegans.